The chain runs to 334 residues: Formamidase (334 aa).

The 247-residue stretch at 14-260 (FLVAAIQFPV…WEIVTGEIYP (247 aa)) folds into the CN hydrolase domain. The active-site Proton acceptor is the Glu60. Residue Lys133 is the Proton donor of the active site. Catalysis depends on Cys166, which acts as the Nucleophile.

This sequence belongs to the carbon-nitrogen hydrolase superfamily. Aliphatic amidase family.

The enzyme catalyses formamide + H2O = formate + NH4(+). Functionally, is an aliphatic amidase with a restricted substrate specificity, as it only hydrolyzes formamide. The protein is Formamidase of Helicobacter pylori (strain HPAG1).